The following is a 208-amino-acid chain: Uracil phosphoribosyltransferase (208 aa).

5-phospho-alpha-D-ribose 1-diphosphate contacts are provided by residues Arg-78, Arg-103, and 130–138 (DPMLATGGS). Residues Ile-193 and 198-200 (GDA) each bind uracil. Asp-199 contributes to the 5-phospho-alpha-D-ribose 1-diphosphate binding site.

Belongs to the UPRTase family. Requires Mg(2+) as cofactor.

It carries out the reaction UMP + diphosphate = 5-phospho-alpha-D-ribose 1-diphosphate + uracil. Its pathway is pyrimidine metabolism; UMP biosynthesis via salvage pathway; UMP from uracil: step 1/1. Allosterically activated by GTP. Its function is as follows. Catalyzes the conversion of uracil and 5-phospho-alpha-D-ribose 1-diphosphate (PRPP) to UMP and diphosphate. The chain is Uracil phosphoribosyltransferase from Shewanella oneidensis (strain ATCC 700550 / JCM 31522 / CIP 106686 / LMG 19005 / NCIMB 14063 / MR-1).